The chain runs to 123 residues: Large ribosomal subunit protein bL12 (123 aa).

This sequence belongs to the bacterial ribosomal protein bL12 family. As to quaternary structure, homodimer. Part of the ribosomal stalk of the 50S ribosomal subunit. Forms a multimeric L10(L12)X complex, where L10 forms an elongated spine to which 2 to 4 L12 dimers bind in a sequential fashion. Binds GTP-bound translation factors.

Functionally, forms part of the ribosomal stalk which helps the ribosome interact with GTP-bound translation factors. Is thus essential for accurate translation. In Haemophilus influenzae (strain 86-028NP), this protein is Large ribosomal subunit protein bL12.